The chain runs to 196 residues: Peptidoglycan recognition protein (196 aa).

A signal peptide spans 1–23 (MARLHSAVVLALALSSLLTEIAA). Disulfide bonds link Cys25-Cys147 and Cys61-Cys67. An N-acetylmuramoyl-L-alanine amidase domain is found at 46-173 (RPVSLVIVQH…RQLIASESPG (128 aa)).

It belongs to the N-acetylmuramoyl-L-alanine amidase 2 family. Monomer. In terms of tissue distribution, constitutively expressed in fat body, epithelial cells and hemocytes. Not detected in Malpighian tubules, silk gland or midgut.

Its function is as follows. Binds specifically to peptidoglycan and triggers the propenoloxidase cascade which is an important insect defense mechanism. This chain is Peptidoglycan recognition protein, found in Bombyx mori (Silk moth).